A 261-amino-acid chain; its full sequence is Beta cell expansion factor A (261 aa).

A signal peptide spans 1 to 21 (MNKRNWLLALSLSLAFSPCYA). The tract at residues 99–261 (KTAKEARIAI…IDKDLTETSR (163 aa)) is SYLF domain.

The protein resides in the secreted. It localises to the host. In terms of biological role, stimulates the proliferation of insulin-producing beta cells during development in gnotobiotic zebrafish and mice. BefA is a microbiome-derived protein that traffics from the host intestinal lumen to the pancreas to act directly on pancreatic islets. In pancreas, interacts directly with host beta cells and elicits their proliferation via a mechanism of increasing membrane permeabilization. Can also permeabilize bacterial cell membranes, but does not show killing of target bacteria. This Aeromonas veronii protein is Beta cell expansion factor A.